Consider the following 361-residue polypeptide: Ubiquitin fusion degradation protein 1 (361 aa).

Monoubiquitin-binding regions lie at residues 27-28 (CY), 30-32 (IAM), and 99-101 (WMM). The segment at 310–361 (EDEESAAGSKSSEQNFQGQGISLRKSNKRKTKSDHDSSKSKAPKSPEVIEID) is disordered. The segment covering 317–329 (GSKSSEQNFQGQG) has biased composition (polar residues). A Phosphoserine modification is found at serine 354.

The protein belongs to the UFD1 family. Component of the heterotrimeric CDC48-NPL4-UFD1 ATPase complex. The CDC48-NPL4-UFD1 ATPase complex interacts with the HRD1 ubiquitin ligase complex composed of the E3 ligase HRD1, its cofactors HRD3, USA1 and DER1, substrate recruiting factor YOS9 and CDC48-binding protein UBX2. Interaction between the complexes is mediated by interaction between CDC48-NPL4-UFD1 complex member CDC48 and HRD1 complex member UBX2. Forms a complex composed of CDC48, NPL4, UFD1, DOA1, SHP1 and deubiquitinase OTU1. Interacts with NPL4, CDC48 and UBX2.

Functions at a post-ubiquitation step in the ubiquitin fusion degradation (UFD) pathway. Has a role in the endoplasmic reticulum-associated degradation (ERAD) pathway. Required for the proteasome-dependent processing/activation of MGA2 and SPT23 transcription factors leading to the subsequent expression of OLE1. Has an additional role in the turnover of OLE1 where it targets ubiquitinated OLE1 and other proteins to the ERAD. The polypeptide is Ubiquitin fusion degradation protein 1 (UFD1) (Saccharomyces cerevisiae (strain ATCC 204508 / S288c) (Baker's yeast)).